A 212-amino-acid polypeptide reads, in one-letter code: Leucyl/phenylalanyl-tRNA--protein transferase (212 aa).

Belongs to the L/F-transferase family.

Its subcellular location is the cytoplasm. The catalysed reaction is N-terminal L-lysyl-[protein] + L-leucyl-tRNA(Leu) = N-terminal L-leucyl-L-lysyl-[protein] + tRNA(Leu) + H(+). The enzyme catalyses N-terminal L-arginyl-[protein] + L-leucyl-tRNA(Leu) = N-terminal L-leucyl-L-arginyl-[protein] + tRNA(Leu) + H(+). It carries out the reaction L-phenylalanyl-tRNA(Phe) + an N-terminal L-alpha-aminoacyl-[protein] = an N-terminal L-phenylalanyl-L-alpha-aminoacyl-[protein] + tRNA(Phe). In terms of biological role, functions in the N-end rule pathway of protein degradation where it conjugates Leu, Phe and, less efficiently, Met from aminoacyl-tRNAs to the N-termini of proteins containing an N-terminal arginine or lysine. This is Leucyl/phenylalanyl-tRNA--protein transferase from Flavobacterium johnsoniae (strain ATCC 17061 / DSM 2064 / JCM 8514 / BCRC 14874 / CCUG 350202 / NBRC 14942 / NCIMB 11054 / UW101) (Cytophaga johnsonae).